The sequence spans 479 residues: Aryl-phospho-beta-D-glucosidase BglA (479 aa).

Glu176 serves as the catalytic Proton donor. Glu377 (nucleophile) is an active-site residue.

It belongs to the glycosyl hydrolase 1 family.

It catalyses the reaction 6-phospho-beta-D-glucosyl-(1-&gt;4)-D-glucose + H2O = D-glucose 6-phosphate + D-glucose. Its function is as follows. Catalyzes the hydrolysis of aryl-phospho-beta-D-glucosides such as 4-methylumbelliferyl-phospho-beta-D-glucopyranoside (MUG-P), phosphoarbutin and phosphosalicin. Plays a major role in the utilization of arbutin or salicin as the sole carbon source. BglA and BglH are the major proteins contributing to hydrolysis of MUG-P by extracts of late-exponential-phase or stationary-phase B.subtilis cells. In Bacillus subtilis (strain 168), this protein is Aryl-phospho-beta-D-glucosidase BglA (bglA).